The primary structure comprises 228 residues: Thermonuclease (228 aa).

A signal peptide spans M1–A23. Residues I24 to A60 constitute a propeptide that is removed on maturation. Residue D100 coordinates Ca(2+). R114 is a catalytic residue. Residues D119 and T120 each contribute to the Ca(2+) site. Residues E122 and R166 contribute to the active site.

Belongs to the thermonuclease family. The cofactor is Ca(2+).

The protein localises to the secreted. The catalysed reaction is Endonucleolytic cleavage to nucleoside 3'-phosphates and 3'-phosphooligonucleotide end-products.. Enzyme that catalyzes the hydrolysis of both DNA and RNA at the 5' position of the phosphodiester bond. The polypeptide is Thermonuclease (nuc) (Staphylococcus aureus (strain MSSA476)).